Reading from the N-terminus, the 219-residue chain is Holliday junction branch migration complex subunit RuvA (219 aa).

A domain I region spans residues 1-67 (MIGWLRGERI…DDGSSLFGFP (67 aa)). Positions 68-146 (DRRERDLFRV…AWSAEKNSDH (79 aa)) are domain II. Positions 147–161 (SDLSLVDRSDLKSLP) are flexible linker. The tract at residues 162-219 (IEPDPLQDLQLTLSTLGYEDLEIRRAMRAVATGEEVPAANDGDGWLRASLRWLNRPSA) is domain III.

This sequence belongs to the RuvA family. As to quaternary structure, homotetramer. Forms an RuvA(8)-RuvB(12)-Holliday junction (HJ) complex. HJ DNA is sandwiched between 2 RuvA tetramers; dsDNA enters through RuvA and exits via RuvB. An RuvB hexamer assembles on each DNA strand where it exits the tetramer. Each RuvB hexamer is contacted by two RuvA subunits (via domain III) on 2 adjacent RuvB subunits; this complex drives branch migration. In the full resolvosome a probable DNA-RuvA(4)-RuvB(12)-RuvC(2) complex forms which resolves the HJ.

The protein resides in the cytoplasm. In terms of biological role, the RuvA-RuvB-RuvC complex processes Holliday junction (HJ) DNA during genetic recombination and DNA repair, while the RuvA-RuvB complex plays an important role in the rescue of blocked DNA replication forks via replication fork reversal (RFR). RuvA specifically binds to HJ cruciform DNA, conferring on it an open structure. The RuvB hexamer acts as an ATP-dependent pump, pulling dsDNA into and through the RuvAB complex. HJ branch migration allows RuvC to scan DNA until it finds its consensus sequence, where it cleaves and resolves the cruciform DNA. The protein is Holliday junction branch migration complex subunit RuvA of Synechococcus sp. (strain CC9311).